The chain runs to 292 residues: MSERRLLLVHAHPDDETLTTGGTIARYAADGADVHVLTCTLGEEGEVIGEEWAQLVADAADQLGGFRIGELTSALSCLGAGRPRFLLGAGHFRDSGMAGTASAADPRAFVNADRDSLTAAIVAVIRELRPHVVVTYDPDGGYGHPDHIQVHTVTTAAVEAAGSAQYPDCGEPWEVAKLYWTVTEASALESGICRIGDIPDGWRLPEPGELPSVPDADVTTVIDVRAVLDAKREALSAHATQVTVAPSGTEYALSNDIAQPILAEEHFVLVRGAAGERDADGRERDLFGGIGH.

H12, D15, and H147 together coordinate Zn(2+).

This sequence belongs to the MshB deacetylase family. The cofactor is Zn(2+).

The catalysed reaction is 1D-myo-inositol 2-acetamido-2-deoxy-alpha-D-glucopyranoside + H2O = 1D-myo-inositol 2-amino-2-deoxy-alpha-D-glucopyranoside + acetate. Functionally, catalyzes the deacetylation of 1D-myo-inositol 2-acetamido-2-deoxy-alpha-D-glucopyranoside (GlcNAc-Ins) in the mycothiol biosynthesis pathway. This is 1D-myo-inositol 2-acetamido-2-deoxy-alpha-D-glucopyranoside deacetylase from Rhodococcus jostii (strain RHA1).